An 807-amino-acid chain; its full sequence is Glycerol-3-phosphate acyltransferase (807 aa).

Residues 305–310 carry the HXXXXD motif motif; sequence CHRSHM.

This sequence belongs to the GPAT/DAPAT family.

Its subcellular location is the cell inner membrane. The enzyme catalyses sn-glycerol 3-phosphate + an acyl-CoA = a 1-acyl-sn-glycero-3-phosphate + CoA. It participates in phospholipid metabolism; CDP-diacylglycerol biosynthesis; CDP-diacylglycerol from sn-glycerol 3-phosphate: step 1/3. This chain is Glycerol-3-phosphate acyltransferase, found in Vibrio atlanticus (strain LGP32) (Vibrio splendidus (strain Mel32)).